Here is a 100-residue protein sequence, read N- to C-terminus: Proline-rich protein 15-like protein (100 aa).

Positions 29 to 51 are disordered; the sequence is YAQTEGGAEPPGPDAGDPHSDFN.

The protein belongs to the PRR15 family.

This Mus musculus (Mouse) protein is Proline-rich protein 15-like protein (Prr15l).